The following is a 417-amino-acid chain: NADH-quinone oxidoreductase subunit D (417 aa).

This sequence belongs to the complex I 49 kDa subunit family. As to quaternary structure, NDH-1 is composed of 14 different subunits. Subunits NuoB, C, D, E, F, and G constitute the peripheral sector of the complex.

The protein localises to the cell inner membrane. The enzyme catalyses a quinone + NADH + 5 H(+)(in) = a quinol + NAD(+) + 4 H(+)(out). Its function is as follows. NDH-1 shuttles electrons from NADH, via FMN and iron-sulfur (Fe-S) centers, to quinones in the respiratory chain. The immediate electron acceptor for the enzyme in this species is believed to be ubiquinone. Couples the redox reaction to proton translocation (for every two electrons transferred, four hydrogen ions are translocated across the cytoplasmic membrane), and thus conserves the redox energy in a proton gradient. This Ralstonia pickettii (strain 12J) protein is NADH-quinone oxidoreductase subunit D.